The chain runs to 505 residues: Ent-kaurene oxidase 2 (505 aa).

The helical transmembrane segment at 3 to 23 (AFVPGGAGAAAAAVGGFVAAA) threads the bilayer. Cys-449 contributes to the heme binding site.

It belongs to the cytochrome P450 family. Heme is required as a cofactor. In terms of tissue distribution, widely expressed.

The protein localises to the membrane. The enzyme catalyses ent-kaur-16-ene + 3 reduced [NADPH--hemoprotein reductase] + 3 O2 = ent-kaur-16-en-19-oate + 3 oxidized [NADPH--hemoprotein reductase] + 4 H2O + 4 H(+). Its pathway is plant hormone biosynthesis; gibberellin biosynthesis. Its function is as follows. Catalyzes three successive oxidations of the 4-methyl group of ent-kaurene giving kaurenoic acid, a key step in gibberellins (GAs) biosynthesis. GAs, which are involved many processes, including stem elongation, play a central role in plant development. In Oryza sativa subsp. japonica (Rice), this protein is Ent-kaurene oxidase 2.